We begin with the raw amino-acid sequence, 140 residues long: Arsenate reductase ArsI2 (140 aa).

C10 serves as the catalytic Nucleophile; cysteine thioarsenate intermediate.

This sequence belongs to the ArsC family.

The catalysed reaction is [glutaredoxin]-dithiol + arsenate + glutathione + H(+) = glutathionyl-S-S-[glutaredoxin] + arsenite + H2O. Functionally, catalyzes the reduction of arsenate [As(V)] to arsenite [As(III)]. Does not constitute the major arsenate reductase in cells: essential only in the absence of ArsC (AC P74313). This Synechocystis sp. (strain ATCC 27184 / PCC 6803 / Kazusa) protein is Arsenate reductase ArsI2.